A 26-amino-acid chain; its full sequence is Hemocyanin subunit 3 (26 aa).

This sequence belongs to the tyrosinase family. Hemocyanin subfamily. As to expression, hemolymph.

It is found in the secreted. It localises to the extracellular space. In terms of biological role, hemocyanins are copper-containing oxygen carriers occurring freely dissolved in the hemolymph of many mollusks and arthropods. This Homarus americanus (American lobster) protein is Hemocyanin subunit 3.